Reading from the N-terminus, the 561-residue chain is Dihydroxy-acid dehydratase 3 (561 aa).

C50 serves as a coordination point for [2Fe-2S] cluster. A Mg(2+)-binding site is contributed by D82. C123 is a binding site for [2Fe-2S] cluster. The Mg(2+) site is built by D124 and K125. K125 is subject to N6-carboxylysine. [2Fe-2S] cluster is bound at residue C195. Residue E447 coordinates Mg(2+). S473 acts as the Proton acceptor in catalysis.

The protein belongs to the IlvD/Edd family. Homodimer. It depends on [2Fe-2S] cluster as a cofactor. The cofactor is Mg(2+).

The enzyme catalyses (2R)-2,3-dihydroxy-3-methylbutanoate = 3-methyl-2-oxobutanoate + H2O. It catalyses the reaction (2R,3R)-2,3-dihydroxy-3-methylpentanoate = (S)-3-methyl-2-oxopentanoate + H2O. The protein operates within amino-acid biosynthesis; L-isoleucine biosynthesis; L-isoleucine from 2-oxobutanoate: step 3/4. Its pathway is amino-acid biosynthesis; L-valine biosynthesis; L-valine from pyruvate: step 3/4. Functions in the biosynthesis of branched-chain amino acids. Catalyzes the dehydration of (2R,3R)-2,3-dihydroxy-3-methylpentanoate (2,3-dihydroxy-3-methylvalerate) into 2-oxo-3-methylpentanoate (2-oxo-3-methylvalerate) and of (2R)-2,3-dihydroxy-3-methylbutanoate (2,3-dihydroxyisovalerate) into 2-oxo-3-methylbutanoate (2-oxoisovalerate), the penultimate precursor to L-isoleucine and L-valine, respectively. This chain is Dihydroxy-acid dehydratase 3, found in Bordetella bronchiseptica (strain ATCC BAA-588 / NCTC 13252 / RB50) (Alcaligenes bronchisepticus).